The primary structure comprises 452 residues: L-seryl-tRNA(Sec) selenium transferase (452 aa).

Lysine 285 carries the post-translational modification N6-(pyridoxal phosphate)lysine.

This sequence belongs to the SelA family. Pyridoxal 5'-phosphate is required as a cofactor.

It localises to the cytoplasm. It catalyses the reaction L-seryl-tRNA(Sec) + selenophosphate + H(+) = L-selenocysteinyl-tRNA(Sec) + phosphate. It participates in aminoacyl-tRNA biosynthesis; selenocysteinyl-tRNA(Sec) biosynthesis; selenocysteinyl-tRNA(Sec) from L-seryl-tRNA(Sec) (bacterial route): step 1/1. Its function is as follows. Converts seryl-tRNA(Sec) to selenocysteinyl-tRNA(Sec) required for selenoprotein biosynthesis. The polypeptide is L-seryl-tRNA(Sec) selenium transferase (Aquifex aeolicus (strain VF5)).